We begin with the raw amino-acid sequence, 177 residues long: Inner membrane-spanning protein YciB (177 aa).

The next 5 membrane-spanning stretches (helical) occupy residues 22–42 (IFIASKSLIFISGLTCLLYWI), 50–70 (INLFSFITIAIFGSLTIIFHN), 76–96 (WKITIIYMIFSVILFISQFFM), 121–141 (FFWALFFLFCSILNIYVALCL), and 151–171 (VFGLSFLMFLSILITSIYINF).

It belongs to the YciB family.

The protein resides in the cell inner membrane. Plays a role in cell envelope biogenesis, maintenance of cell envelope integrity and membrane homeostasis. In Buchnera aphidicola subsp. Schizaphis graminum (strain Sg), this protein is Inner membrane-spanning protein YciB.